The sequence spans 145 residues: 3-hydroxyacyl-[acyl-carrier-protein] dehydratase FabZ (145 aa).

His48 is a catalytic residue.

It belongs to the thioester dehydratase family. FabZ subfamily.

It is found in the cytoplasm. It carries out the reaction a (3R)-hydroxyacyl-[ACP] = a (2E)-enoyl-[ACP] + H2O. Involved in unsaturated fatty acids biosynthesis. Catalyzes the dehydration of short chain beta-hydroxyacyl-ACPs and long chain saturated and unsaturated beta-hydroxyacyl-ACPs. This is 3-hydroxyacyl-[acyl-carrier-protein] dehydratase FabZ from Geobacillus thermodenitrificans (strain NG80-2).